The sequence spans 197 residues: Probable molybdenum cofactor guanylyltransferase (197 aa).

Residues 12–14, Lys24, Asp71, and Asp103 each bind GTP; that span reads LAG. Asp103 contributes to the Mg(2+) binding site.

The protein belongs to the MobA family. The cofactor is Mg(2+).

The protein resides in the cytoplasm. The catalysed reaction is Mo-molybdopterin + GTP + H(+) = Mo-molybdopterin guanine dinucleotide + diphosphate. Functionally, transfers a GMP moiety from GTP to Mo-molybdopterin (Mo-MPT) cofactor (Moco or molybdenum cofactor) to form Mo-molybdopterin guanine dinucleotide (Mo-MGD) cofactor. This Mycolicibacterium paratuberculosis (strain ATCC BAA-968 / K-10) (Mycobacterium paratuberculosis) protein is Probable molybdenum cofactor guanylyltransferase.